Here is a 219-residue protein sequence, read N- to C-terminus: Glucagon-2 (219 aa).

Positions 1-20 (MKSTCYMIGILLLILQNTYQ) are cleaved as a signal peptide. Propeptides lie at residues 21-50 (SPVP…LKEV), 84-95 (SGGLSRRNADYE), 136-140 (NAEIE), 175-178 (IRYS), and 213-219 (KDLLEEH). Residues 23-43 (VPEADGSSRSVKAARNEAVDD) are disordered.

It belongs to the glucagon family.

It localises to the secreted. Functionally, promotes hydrolysis of glycogen and lipids, and raises the blood sugar level. This is Glucagon-2 (gcg2) from Xenopus laevis (African clawed frog).